A 111-amino-acid chain; its full sequence is Class I hydrophobin 2 (111 aa).

Positions 1–21 (MFSRVMFCTFLILPLLAAATA) are cleaved as a signal peptide. Intrachain disulfides connect Cys-30-Cys-90, Cys-37-Cys-84, Cys-38-Cys-71, and Cys-91-Cys-104.

It belongs to the fungal hydrophobin family. In terms of assembly, self-assembles to form functional amyloid fibrils called rodlets. Self-assembly into fibrillar rodlets occurs spontaneously at hydrophobic:hydrophilic interfaces and the rodlets further associate laterally to form amphipathic monolayers. Behavior depends on environmental conditions: (1) when the pH increases or in the presence of Ca(2+) ions, an assembled state, beta-sheet rich, is formed; (2) when the solvent polarity increases, the vhm2 shows an increased tendency to reach hydrophobic/hydrophilic interfaces, with no detectable conformational change; and (3) at high temperature, a reversible conformational change and reversible aggregation occur. The physical and chemical properties, both in solution and as a biofilm, are affected by polysaccharides that act as hydrophilic stabilizer.

The protein resides in the secreted. It localises to the cell wall. Functionally, aerial growth, conidiation, and dispersal of filamentous fungi in the environment rely upon a capability of their secreting small amphipathic proteins called hydrophobins (HPBs) with low sequence identity. Class I can self-assemble into an outermost layer of rodlet bundles on aerial cell surfaces, conferring cellular hydrophobicity that supports fungal growth, development and dispersal; whereas Class II form highly ordered films at water-air interfaces through intermolecular interactions but contribute nothing to the rodlet structure. Vmh2 is a class I hydrophobin involved in biofilm formation and is essential for the maintenance of the surface hydrophobicity of the mycelium. Seems not to be involved in hyphal resistance against environmental stress. The sequence is that of Class I hydrophobin 2 from Pleurotus ostreatus (strain PC15) (Oyster mushroom).